The following is a 545-amino-acid chain: Dual specificity calcium/calmodulin-dependent 3',5'-cyclic nucleotide phosphodiesterase 1A (545 aa).

Calmodulin-binding regions lie at residues 24 to 44 (TEKMWQRLKGILRCLVKQLEK) and 114 to 137 (EKPKFRSIVHAVQAGIFVERMYRK). Residues 142–522 (VGLTYPAAVI…ERWKELAAQG (381 aa)) enclose the PDEase domain. H219 (proton donor) is an active-site residue. H223, H259, D260, and D366 together coordinate Zn(2+). A Mg(2+)-binding site is contributed by D260. Positions 526 to 545 (LHKNSEELGNTEEKHADTRP) are disordered.

Belongs to the cyclic nucleotide phosphodiesterase family. PDE1 subfamily. In terms of assembly, homodimer. Interacts with YWHAZ. Requires Zn(2+) as cofactor. The cofactor is Mg(2+). Expressed in brain, kidney and testis.

Its subcellular location is the cell projection. It is found in the cilium. The protein localises to the flagellum. It catalyses the reaction a nucleoside 3',5'-cyclic phosphate + H2O = a nucleoside 5'-phosphate + H(+). The enzyme catalyses 3',5'-cyclic GMP + H2O = GMP + H(+). It carries out the reaction 3',5'-cyclic AMP + H2O = AMP + H(+). Type I PDE are activated by the binding of calmodulin in the presence of Ca(2+). Its activity is regulated as follows. Activated by the binding of calmodulin in the presence of Ca(2+). Its function is as follows. Calcium/calmodulin-dependent cyclic nucleotide phosphodiesterase with a dual specificity for the second messengers cGMP and cAMP, which are key regulators of many important physiological processes. Has a higher efficiency with cGMP compared to cAMP. This chain is Dual specificity calcium/calmodulin-dependent 3',5'-cyclic nucleotide phosphodiesterase 1A, found in Mus musculus (Mouse).